Here is a 423-residue protein sequence, read N- to C-terminus: Acaloleptin A (423 aa).

Residues 1–17 (MITKISLILFAVLLVSG) form the signal peptide. Residues 18-26 (LEEEERWKR) constitute a propeptide that is removed on maturation. 4 disordered regions span residues 28–58 (LQPGAPNVNNNDQPWQVSPHISRDDSGNTKT), 108–128 (INNKDQPWQVSPHISRDDNGN), 180–203 (NVNNKDQPWQVSPHISRDDSGNTR), and 355–385 (SDDEDEEEEEDQPWQLNPNIARGDDGNTRAD). Polar residues predominate over residues 34–43 (NVNNNDQPWQ). The span at 180–189 (NVNNKDQPWQ) shows a compositional bias: polar residues. Residues 357–366 (DEDEEEEEDQ) show a composition bias toward acidic residues. Over residues 376 to 385 (RGDDGNTRAD) the composition is skewed to basic and acidic residues.

It belongs to the coleoptericin family. Hemolymph (at protein level). Larval fat body.

It is found in the secreted. Acaloleptins A1-A4 show antibacterial activity against Gram-negative bacteria but not against Gram-positive bacteria. Acaloleptin A5 shows antibacterial activity against Gram-positive bacteria but not against Gram-negative bacteria, and may also have antifungal activity. The sequence is that of Acaloleptin A from Acalolepta luxuriosa (Udo longhorn beetle).